The sequence spans 591 residues: Serine/threonine-protein kinase PAK 4 (591 aa).

The CRIB domain maps to 11–24 (ISAPSNFEHRVHTG). A linker region spans residues 25-320 (FDQHEQKFTG…VVDPGDPRSY (296 aa)). The residue at position 41 (Ser-41) is a Phosphoserine. The residue at position 78 (Lys-78) is an N6-methyllysine. The disordered stretch occupies residues 95–301 (TRSNSLRRDS…PQREPQRVSH (207 aa)). Residues Ser-104 and Ser-148 each carry the phosphoserine modification. Over residues 149–164 (GDRRRAGPEKRPKSSR) the composition is skewed to basic and acidic residues. 2 positions are modified to phosphoserine: Ser-167 and Ser-181. Thr-187 is modified (phosphothreonine). Residues 191-202 (AGLASGAKLAAG) are compositionally biased toward low complexity. Ser-195 carries the phosphoserine modification. A Phosphothreonine modification is found at Thr-207. The span at 242-260 (SSSSSSRPPTRARGAPSPG) shows a compositional bias: low complexity. 2 positions are modified to phosphoserine: Ser-258 and Ser-267. Positions 271-290 (LAPPACTPAAPAVPGPPGPR) are enriched in pro residues. The residue at position 291 (Ser-291) is a Phosphoserine. Positions 292-301 (PQREPQRVSH) are enriched in basic and acidic residues. The segment at 298 to 323 (RVSHEQFRAALQLVVDPGDPRSYLDN) is GEF-interaction domain (GID). The region spanning 321 to 572 (LDNFIKIGEG…AAELLKHPFL (252 aa)) is the Protein kinase domain. ATP contacts are provided by residues 327–335 (IGEGSTGIV), Lys-350, and 396–398 (EFL). Asp-440 serves as the catalytic Proton acceptor. Position 458 to 460 (458 to 460 (DFG)) interacts with ATP. Ser-474 bears the Phosphoserine; by autocatalysis mark.

Belongs to the protein kinase superfamily. STE Ser/Thr protein kinase family. STE20 subfamily. As to quaternary structure, interacts with FGFR2 and GRB2. Interacts tightly with GTP-bound but not GDP-bound CDC42/p21 and weakly with RAC1. Interacts with INKA1. Interacts with SH3RF2. Interacts with RHOU and PAXI; the PAK4-RHOU complex protects RHOU from ubiquitination and acts as a scaffold to suppport paxillin/PAXI phosphorylation. In terms of processing, autophosphorylated on serine residues when activated by CDC42/p21. Phosphorylated on tyrosine residues upon stimulation of FGFR2. Methylated by SETD6. Post-translationally, polyubiquitinated, leading to its proteasomal degradation. Highest expression in prostate, testis and colon.

The protein resides in the cytoplasm. It carries out the reaction L-seryl-[protein] + ATP = O-phospho-L-seryl-[protein] + ADP + H(+). It catalyses the reaction L-threonyl-[protein] + ATP = O-phospho-L-threonyl-[protein] + ADP + H(+). Inhibited by INKA1; which inhibits the serine/threonine-protein kinase activity by binding PAK4 in a substrate-like manner. Functionally, serine/threonine-protein kinase that plays a role in a variety of different signaling pathways including cytoskeleton regulation, cell adhesion turnover, cell migration, growth, proliferation or cell survival. Activation by various effectors including growth factor receptors or active CDC42 and RAC1 results in a conformational change and a subsequent autophosphorylation on several serine and/or threonine residues. Phosphorylates and inactivates the protein phosphatase SSH1, leading to increased inhibitory phosphorylation of the actin binding/depolymerizing factor cofilin. Decreased cofilin activity may lead to stabilization of actin filaments. Phosphorylates LIMK1, a kinase that also inhibits the activity of cofilin. Phosphorylates integrin beta5/ITGB5 and thus regulates cell motility. Phosphorylates ARHGEF2 and activates the downstream target RHOA that plays a role in the regulation of assembly of focal adhesions and actin stress fibers. Stimulates cell survival by phosphorylating the BCL2 antagonist of cell death BAD. Alternatively, inhibits apoptosis by preventing caspase-8 binding to death domain receptors in a kinase independent manner. Plays a role in cell-cycle progression by controlling levels of the cell-cycle regulatory protein CDKN1A and by phosphorylating RAN. Promotes kinase-independent stabilization of RHOU, thereby contributing to focal adhesion disassembly during cell migration. This Homo sapiens (Human) protein is Serine/threonine-protein kinase PAK 4.